A 227-amino-acid polypeptide reads, in one-letter code: Small ribosomal subunit protein uS3 (227 aa).

The region spanning 39–107 (VRQLLQKRLK…PVHITIEEVR (69 aa)) is the KH type-2 domain.

This sequence belongs to the universal ribosomal protein uS3 family. As to quaternary structure, part of the 30S ribosomal subunit. Forms a tight complex with proteins S10 and S14.

Its function is as follows. Binds the lower part of the 30S subunit head. Binds mRNA in the 70S ribosome, positioning it for translation. This Coxiella burnetii (strain RSA 493 / Nine Mile phase I) protein is Small ribosomal subunit protein uS3 (rpsC).